The sequence spans 199 residues: 7-methyl-GTP pyrophosphatase (199 aa).

Asp-76 (proton acceptor) is an active-site residue.

The protein belongs to the Maf family. YceF subfamily. A divalent metal cation serves as cofactor.

The protein localises to the cytoplasm. The catalysed reaction is N(7)-methyl-GTP + H2O = N(7)-methyl-GMP + diphosphate + H(+). Functionally, nucleoside triphosphate pyrophosphatase that hydrolyzes 7-methyl-GTP (m(7)GTP). May have a dual role in cell division arrest and in preventing the incorporation of modified nucleotides into cellular nucleic acids. The chain is 7-methyl-GTP pyrophosphatase (maf-2) from Brucella suis biovar 1 (strain 1330).